Consider the following 313-residue polypeptide: 4-hydroxy-3-methylbut-2-enyl diphosphate reductase (313 aa).

C12 contributes to the [4Fe-4S] cluster binding site. (2E)-4-hydroxy-3-methylbut-2-enyl diphosphate-binding residues include H41 and H74. Dimethylallyl diphosphate contacts are provided by H41 and H74. H41 and H74 together coordinate isopentenyl diphosphate. C96 serves as a coordination point for [4Fe-4S] cluster. H124 is a binding site for (2E)-4-hydroxy-3-methylbut-2-enyl diphosphate. H124 is a binding site for dimethylallyl diphosphate. H124 serves as a coordination point for isopentenyl diphosphate. The active-site Proton donor is the E126. T167 provides a ligand contact to (2E)-4-hydroxy-3-methylbut-2-enyl diphosphate. C197 is a [4Fe-4S] cluster binding site. Positions 225, 226, 227, and 269 each coordinate (2E)-4-hydroxy-3-methylbut-2-enyl diphosphate. Residues S225, S226, N227, and S269 each contribute to the dimethylallyl diphosphate site. 4 residues coordinate isopentenyl diphosphate: S225, S226, N227, and S269.

The protein belongs to the IspH family. In terms of assembly, homodimer. Requires [4Fe-4S] cluster as cofactor.

It carries out the reaction isopentenyl diphosphate + 2 oxidized [2Fe-2S]-[ferredoxin] + H2O = (2E)-4-hydroxy-3-methylbut-2-enyl diphosphate + 2 reduced [2Fe-2S]-[ferredoxin] + 2 H(+). It catalyses the reaction dimethylallyl diphosphate + 2 oxidized [2Fe-2S]-[ferredoxin] + H2O = (2E)-4-hydroxy-3-methylbut-2-enyl diphosphate + 2 reduced [2Fe-2S]-[ferredoxin] + 2 H(+). It functions in the pathway isoprenoid biosynthesis; dimethylallyl diphosphate biosynthesis; dimethylallyl diphosphate from (2E)-4-hydroxy-3-methylbutenyl diphosphate: step 1/1. Its pathway is isoprenoid biosynthesis; isopentenyl diphosphate biosynthesis via DXP pathway; isopentenyl diphosphate from 1-deoxy-D-xylulose 5-phosphate: step 6/6. Catalyzes the conversion of 1-hydroxy-2-methyl-2-(E)-butenyl 4-diphosphate (HMBPP) into a mixture of isopentenyl diphosphate (IPP) and dimethylallyl diphosphate (DMAPP). Acts in the terminal step of the DOXP/MEP pathway for isoprenoid precursor biosynthesis. The polypeptide is 4-hydroxy-3-methylbut-2-enyl diphosphate reductase (Buchnera aphidicola subsp. Schizaphis graminum (strain Sg)).